The sequence spans 204 residues: Probable nicotinate-nucleotide adenylyltransferase (204 aa).

The protein belongs to the NadD family.

The enzyme catalyses nicotinate beta-D-ribonucleotide + ATP + H(+) = deamido-NAD(+) + diphosphate. It participates in cofactor biosynthesis; NAD(+) biosynthesis; deamido-NAD(+) from nicotinate D-ribonucleotide: step 1/1. Catalyzes the reversible adenylation of nicotinate mononucleotide (NaMN) to nicotinic acid adenine dinucleotide (NaAD). In Clostridium beijerinckii (strain ATCC 51743 / NCIMB 8052) (Clostridium acetobutylicum), this protein is Probable nicotinate-nucleotide adenylyltransferase.